Here is an 82-residue protein sequence, read N- to C-terminus: ATP synthase subunit c, chloroplastic (82 aa).

2 helical membrane passes run 7–27 (GASVIAAGLAIGLASIGPGIG) and 57–77 (LAFMESLTIYGLVVALCLLFA).

It belongs to the ATPase C chain family. In terms of assembly, F-type ATPases have 2 components, F(1) - the catalytic core - and F(0) - the membrane proton channel. F(1) has five subunits: alpha(3), beta(3), gamma(1), delta(1), epsilon(1). F(0) has four main subunits: a(1), b(1), b'(1) and c(10-14). The alpha and beta chains form an alternating ring which encloses part of the gamma chain. F(1) is attached to F(0) by a central stalk formed by the gamma and epsilon chains, while a peripheral stalk is formed by the delta, b and b' chains.

Its subcellular location is the plastid. The protein localises to the chloroplast thylakoid membrane. Functionally, f(1)F(0) ATP synthase produces ATP from ADP in the presence of a proton or sodium gradient. F-type ATPases consist of two structural domains, F(1) containing the extramembraneous catalytic core and F(0) containing the membrane proton channel, linked together by a central stalk and a peripheral stalk. During catalysis, ATP synthesis in the catalytic domain of F(1) is coupled via a rotary mechanism of the central stalk subunits to proton translocation. In terms of biological role, key component of the F(0) channel; it plays a direct role in translocation across the membrane. A homomeric c-ring of between 10-14 subunits forms the central stalk rotor element with the F(1) delta and epsilon subunits. The protein is ATP synthase subunit c, chloroplastic of Emiliania huxleyi (Coccolithophore).